Reading from the N-terminus, the 100-residue chain is Putative ESAT-6-like protein Y (100 aa).

Belongs to the WXG100 family.

The chain is Putative ESAT-6-like protein Y from Mycobacterium leprae (strain TN).